The following is a 221-amino-acid chain: CDP-diacylglycerol--glycerol-3-phosphate 3-phosphatidyltransferase (221 aa).

5 consecutive transmembrane segments (helical) span residues 8-28 (ILTV…LYFH), 34-54 (WFAL…GYLA), 75-95 (MVVI…WLIL), 133-153 (AQMV…LEGI), and 187-207 (ATWL…ITGW).

The protein belongs to the CDP-alcohol phosphatidyltransferase class-I family.

Its subcellular location is the cell membrane. The enzyme catalyses a CDP-1,2-diacyl-sn-glycerol + sn-glycerol 3-phosphate = a 1,2-diacyl-sn-glycero-3-phospho-(1'-sn-glycero-3'-phosphate) + CMP + H(+). It participates in phospholipid metabolism; phosphatidylglycerol biosynthesis; phosphatidylglycerol from CDP-diacylglycerol: step 1/2. Functionally, this protein catalyzes the committed step to the synthesis of the acidic phospholipids. The chain is CDP-diacylglycerol--glycerol-3-phosphate 3-phosphatidyltransferase (pgsA) from Cereibacter sphaeroides (strain ATCC 17023 / DSM 158 / JCM 6121 / CCUG 31486 / LMG 2827 / NBRC 12203 / NCIMB 8253 / ATH 2.4.1.) (Rhodobacter sphaeroides).